We begin with the raw amino-acid sequence, 180 residues long: NADH-quinone oxidoreductase subunit I (180 aa).

4Fe-4S ferredoxin-type domains are found at residues 48–80 (IVLT…LQKA) and 90–119 (EFFR…LTPD). Cys-60, Cys-63, Cys-66, Cys-70, Cys-99, Cys-102, Cys-105, and Cys-109 together coordinate [4Fe-4S] cluster. Residues 161-174 (KPKGDAEHEAKPID) show a composition bias toward basic and acidic residues. Residues 161–180 (KPKGDAEHEAKPIDVKSLLP) are disordered.

Belongs to the complex I 23 kDa subunit family. In terms of assembly, NDH-1 is composed of 14 different subunits. Subunits NuoA, H, J, K, L, M, N constitute the membrane sector of the complex. [4Fe-4S] cluster serves as cofactor.

Its subcellular location is the cell inner membrane. The catalysed reaction is a quinone + NADH + 5 H(+)(in) = a quinol + NAD(+) + 4 H(+)(out). NDH-1 shuttles electrons from NADH, via FMN and iron-sulfur (Fe-S) centers, to quinones in the respiratory chain. The immediate electron acceptor for the enzyme in this species is believed to be ubiquinone. Couples the redox reaction to proton translocation (for every two electrons transferred, four hydrogen ions are translocated across the cytoplasmic membrane), and thus conserves the redox energy in a proton gradient. This is NADH-quinone oxidoreductase subunit I from Aeromonas salmonicida (strain A449).